Consider the following 1106-residue polypeptide: GYF domain-containing protein gyf-1 (1106 aa).

Residues methionine 1–proline 17 show a composition bias toward polar residues. Disordered stretches follow at residues methionine 1–aspartate 50, glycine 160–valine 370, and lysine 383–serine 434. The segment covering arginine 30–serine 42 has biased composition (low complexity). Residues leucine 162–lysine 180 show a composition bias toward polar residues. Residues glycine 207–asparagine 224 show a composition bias toward gly residues. Polar residues predominate over residues alanine 229–phenylalanine 243. The segment covering arginine 248–threonine 261 has biased composition (gly residues). Residues valine 306 to glutamate 322 are compositionally biased toward polar residues. Composition is skewed to low complexity over residues glutamine 334–glutamine 353 and proline 390–arginine 410. The GYF domain occupies proline 459–glycine 508. Residues leucine 584 to arginine 746 are a coiled coil. 4 disordered regions span residues alanine 778–proline 811, lysine 909–valine 928, alanine 1026–isoleucine 1076, and arginine 1087–arginine 1106. A compositionally biased stretch (polar residues) spans valine 786 to serine 801. Residues serine 1046–glycine 1057 are compositionally biased toward low complexity.

The chain is GYF domain-containing protein gyf-1 from Caenorhabditis elegans.